Here is a 164-residue protein sequence, read N- to C-terminus: MRQKVVFPGTFDPLTSGHFDLINRASILFDEVILAVAASPGKRPLFSLEERLALAKEVCQSLPNVTITGFSNLLIDFMKEQQATILLRGIRTGSDFEYESQLAAMYRRMMPEMEIIFLPPAEQYAFVSSTLVREIALHGGDAGQFVTPNVAEAIKAKQLQLAQS.

T10 serves as a coordination point for substrate. ATP-binding positions include 10 to 11 (TF) and H18. The substrate site is built by K42, L74, and R88. ATP contacts are provided by residues 89–91 (GIR), E99, and 124–130 (YAFVSST).

Belongs to the bacterial CoaD family. Homohexamer. It depends on Mg(2+) as a cofactor.

The protein localises to the cytoplasm. It carries out the reaction (R)-4'-phosphopantetheine + ATP + H(+) = 3'-dephospho-CoA + diphosphate. It functions in the pathway cofactor biosynthesis; coenzyme A biosynthesis; CoA from (R)-pantothenate: step 4/5. Functionally, reversibly transfers an adenylyl group from ATP to 4'-phosphopantetheine, yielding dephospho-CoA (dPCoA) and pyrophosphate. The sequence is that of Phosphopantetheine adenylyltransferase from Tolumonas auensis (strain DSM 9187 / NBRC 110442 / TA 4).